Here is a 356-residue protein sequence, read N- to C-terminus: Protein-arginine kinase (356 aa).

A Phosphagen kinase C-terminal domain is found at 22–249 (FRPISTLSLS…SKILSAETEA (228 aa)). Residues 25-29 (ISTLS), 172-176 (VARAF), and 202-207 (SSLLPL) contribute to the ATP site.

This sequence belongs to the ATP:guanido phosphotransferase family.

It carries out the reaction L-arginyl-[protein] + ATP = N(omega)-phospho-L-arginyl-[protein] + ADP + H(+). Functionally, catalyzes the specific phosphorylation of arginine residues in proteins. In Chlamydia muridarum (strain MoPn / Nigg), this protein is Protein-arginine kinase.